The sequence spans 370 residues: Gap junction delta-4 protein (370 aa).

At 1–19 (MEGVDLLGFLIITLNCNVT) the chain is on the cytoplasmic side. Residues 20-40 (MVGKLWFVLTMLLRMLVIVLA) traverse the membrane as a helical segment. Residues 41–76 (GRPVYQDEQERFVCNTLQPGCANVCYDVFSPVSHLR) are Extracellular-facing. Residues 77–97 (FWLIQGVCVLLPSAVFSVYVL) form a helical membrane-spanning segment. Residues 98 to 146 (HRGATLAALGPRRCPDPREPASGQRRCPRPFGERGGLQVPDFSAGYIIH) are Cytoplasmic-facing. A helical transmembrane segment spans residues 147–167 (LLLRTLLEAAFGALHYFLFGF). Residues 168-196 (LAPKKFPCTRPPCTGVVDCYVSRPTEKSL) are Extracellular-facing. A helical membrane pass occupies residues 197–217 (LMLFLWAVSALSFLLGLADLV). Topologically, residues 218-370 (CSLRRRMRRR…HLRARKSEWV (153 aa)) are cytoplasmic. Residues 224 to 370 (MRRRPGPPTS…HLRARKSEWV (147 aa)) form a disordered region. Residues 246-260 (AEGRRTDEEGGREEE) are compositionally biased toward basic and acidic residues. A compositionally biased stretch (low complexity) spans 331 to 346 (PSAAPSRLAAPPSCSS).

Belongs to the connexin family. Delta-type subfamily. In terms of assembly, a connexon is composed of a hexamer of connexins. In terms of tissue distribution, expressed in pancreas, kidney, skeletal muscle, liver, placenta, and heart.

It localises to the cell membrane. Its subcellular location is the cell junction. It is found in the gap junction. In terms of biological role, one gap junction consists of a cluster of closely packed pairs of transmembrane channels, the connexons, through which materials of low MW diffuse from one cell to a neighboring cell. The protein is Gap junction delta-4 protein (GJD4) of Homo sapiens (Human).